A 333-amino-acid polypeptide reads, in one-letter code: Testin-2 (333 aa).

A signal peptide spans 1-17 (MIAVLFLAILCLEVDST). Cystine bridges form between cysteine 135-cysteine 178, cysteine 169-cysteine 211, and cysteine 269-cysteine 322. Asparagine 173 carries N-linked (GlcNAc...) asparagine glycosylation. Residues histidine 276 and asparagine 300 contribute to the active site.

The protein belongs to the peptidase C1 family. In terms of tissue distribution, sertoli cells.

It is found in the secreted. The sequence is that of Testin-2 (Testin) from Rattus norvegicus (Rat).